The following is a 183-amino-acid chain: Large ribosomal subunit protein uL5 (183 aa).

It belongs to the universal ribosomal protein uL5 family. As to quaternary structure, part of the 50S ribosomal subunit; part of the 5S rRNA/L5/L18/L25 subcomplex. Contacts the 5S rRNA and the P site tRNA. Forms a bridge to the 30S subunit in the 70S ribosome.

Its function is as follows. This is one of the proteins that bind and probably mediate the attachment of the 5S RNA into the large ribosomal subunit, where it forms part of the central protuberance. In the 70S ribosome it contacts protein S13 of the 30S subunit (bridge B1b), connecting the 2 subunits; this bridge is implicated in subunit movement. Contacts the P site tRNA; the 5S rRNA and some of its associated proteins might help stabilize positioning of ribosome-bound tRNAs. The chain is Large ribosomal subunit protein uL5 from Corynebacterium aurimucosum (strain ATCC 700975 / DSM 44827 / CIP 107346 / CN-1) (Corynebacterium nigricans).